We begin with the raw amino-acid sequence, 444 residues long: Citrate-proton symporter (444 aa).

The Cytoplasmic segment spans residues 1–41; it reads MPTARCSMRASSTAPVRMMATAGGARIGAILRVTSGNFLEQ. The helical transmembrane segment at 42 to 62 threads the bilayer; sequence FDFFLFGFYATYIAHTFFPAS. Over 63 to 72 the chain is Periplasmic; that stretch reads SEFASLMMTF. A helical transmembrane segment spans residues 73-93; it reads AVFGAGFLMRPIGAIVLGAYI. Residues 94 to 114 are Cytoplasmic-facing; that stretch reads DKVGRRKGLIVTLSIMATGTF. A helical transmembrane segment spans residues 115–135; the sequence is LIVLIPSYQTIGLWAPLLVLI. At 136 to 137 the chain is on the periplasmic side; it reads GR. A helical membrane pass occupies residues 138-158; the sequence is LLQGFSAGAELGGVSVYLAEI. Topologically, residues 159-177 are cytoplasmic; it reads ATPGRKGFYTSWQSGSQQV. Residues 178 to 198 form a helical membrane-spanning segment; sequence AIMVAAAMGFALNAVLEPSAI. Residue serine 199 is a topological domain, periplasmic. A helical membrane pass occupies residues 200–220; sequence DWGWRIPFLFGVLIVPFIFIL. Over 221 to 251 the chain is Cytoplasmic; that stretch reads RRKLEETQEFTARRHHLAMRQVFATLLANWQ. The chain crosses the membrane as a helical span at residues 252 to 272; it reads VVIAGMMMVAMTTTAFYLITV. Topologically, residues 273–289 are periplasmic; it reads YAPTFGKKVLMLSASDS. The helical transmembrane segment at 290-310 threads the bilayer; that stretch reads LLVTLLVAISNFFWLPVGGAL. At 311 to 318 the chain is on the cytoplasmic side; that stretch reads SDRFGRRS. Residues 319 to 339 traverse the membrane as a helical segment; it reads VLIAMTLLALATAWPALTMLA. Position 340 (asparagine 340) is a topological domain, periplasmic. Residues 341–361 traverse the membrane as a helical segment; it reads APSFLMMLSVLLWLSFIYGMY. At 362–379 the chain is on the cytoplasmic side; the sequence is NGAMIPALTEIMPAEVRV. A helical membrane pass occupies residues 380 to 400; the sequence is AGFSLAYSLATAVFGGFTPVI. Residues 401–411 are Periplasmic-facing; the sequence is STALIEYTGDK. Residues 412–432 form a helical membrane-spanning segment; the sequence is ASPGYWMSFAAICGLLATCYL. Residues 433-444 are Cytoplasmic-facing; it reads YRRSAVALQTAR.

Belongs to the major facilitator superfamily. Metabolite:H+ Symporter (MHS) family (TC 2.A.1.6) family.

The protein resides in the cell inner membrane. Its function is as follows. Uptake of citrate across the boundary membrane with the concomitant transport of protons into the cell (symport system). The polypeptide is Citrate-proton symporter (citH) (Klebsiella pneumoniae).